The following is a 313-amino-acid chain: Protein PHOSPHATE-INDUCED 1 (313 aa).

The first 22 residues, 1 to 22, serve as a signal peptide directing secretion; that stretch reads MATSHFILKLFLVISFCNVCFA. Asn119 is a glycosylation site (N-linked (GlcNAc...) asparagine).

Belongs to the EXORDIUM family.

It is found in the secreted. It localises to the extracellular space. The protein localises to the apoplast. Functionally, may be involved in the regulation of cell division. This is Protein PHOSPHATE-INDUCED 1 from Nicotiana tabacum (Common tobacco).